Here is a 260-residue protein sequence, read N- to C-terminus: Pyridoxine 5'-phosphate synthase (260 aa).

Asn15 serves as a coordination point for 3-amino-2-oxopropyl phosphate. Position 17–18 (17–18 (DH)) interacts with 1-deoxy-D-xylulose 5-phosphate. Arg26 is a binding site for 3-amino-2-oxopropyl phosphate. His51 acts as the Proton acceptor in catalysis. Residues Arg53 and His58 each contribute to the 1-deoxy-D-xylulose 5-phosphate site. Catalysis depends on Glu78, which acts as the Proton acceptor. Thr108 serves as a coordination point for 1-deoxy-D-xylulose 5-phosphate. Catalysis depends on His199, which acts as the Proton donor. Residues Gly200 and 221 to 222 (GH) each bind 3-amino-2-oxopropyl phosphate.

The protein belongs to the PNP synthase family. As to quaternary structure, homooctamer; tetramer of dimers.

The protein localises to the cytoplasm. It carries out the reaction 3-amino-2-oxopropyl phosphate + 1-deoxy-D-xylulose 5-phosphate = pyridoxine 5'-phosphate + phosphate + 2 H2O + H(+). Its pathway is cofactor biosynthesis; pyridoxine 5'-phosphate biosynthesis; pyridoxine 5'-phosphate from D-erythrose 4-phosphate: step 5/5. Catalyzes the complicated ring closure reaction between the two acyclic compounds 1-deoxy-D-xylulose-5-phosphate (DXP) and 3-amino-2-oxopropyl phosphate (1-amino-acetone-3-phosphate or AAP) to form pyridoxine 5'-phosphate (PNP) and inorganic phosphate. This Cupriavidus taiwanensis (strain DSM 17343 / BCRC 17206 / CCUG 44338 / CIP 107171 / LMG 19424 / R1) (Ralstonia taiwanensis (strain LMG 19424)) protein is Pyridoxine 5'-phosphate synthase.